The sequence spans 208 residues: Large ribosomal subunit protein uL4 (208 aa).

Residues 44 to 89 (RRQGTHKAKNRSEVRGGGRKPYRQKGTGHARQGSTRSPLMTGGGTI) are disordered. A compositionally biased stretch (basic residues) spans 60 to 71 (GGRKPYRQKGTG).

The protein belongs to the universal ribosomal protein uL4 family. In terms of assembly, part of the 50S ribosomal subunit.

Functionally, one of the primary rRNA binding proteins, this protein initially binds near the 5'-end of the 23S rRNA. It is important during the early stages of 50S assembly. It makes multiple contacts with different domains of the 23S rRNA in the assembled 50S subunit and ribosome. In terms of biological role, forms part of the polypeptide exit tunnel. The polypeptide is Large ribosomal subunit protein uL4 (Chlorobium phaeobacteroides (strain BS1)).